We begin with the raw amino-acid sequence, 284 residues long: MSAAISRNWPAPAKLNLFLHINGRRTDGYHELQTLFQFIDYCDMLDFKVTDSSELILHSNMAGVVADSDNLILRAAKSLQQMTSFKGGAEIWLDKRLPMGGGLGGGSSDAATTLVALNTLWNTQLSTEELAKIGLKLGADIPVFIHGFAAFAEGIGERLQVVSPPEPWYLVIAPDAHVSTAEVFQDPLLPRNTPKLAIDTLMSQAWINDCQKLVVSKYPQVAKALGWLLEYAPSRMTGTGACVFGEFTQQQQALAALAKLPSDMQGFVAKGMNISPLITRLNHP.

Lys-14 is a catalytic residue. 98–108 (PMGGGLGGGSS) is an ATP binding site. Residue Asp-140 is part of the active site.

This sequence belongs to the GHMP kinase family. IspE subfamily.

The catalysed reaction is 4-CDP-2-C-methyl-D-erythritol + ATP = 4-CDP-2-C-methyl-D-erythritol 2-phosphate + ADP + H(+). It participates in isoprenoid biosynthesis; isopentenyl diphosphate biosynthesis via DXP pathway; isopentenyl diphosphate from 1-deoxy-D-xylulose 5-phosphate: step 3/6. Functionally, catalyzes the phosphorylation of the position 2 hydroxy group of 4-diphosphocytidyl-2C-methyl-D-erythritol. In Shewanella sp. (strain W3-18-1), this protein is 4-diphosphocytidyl-2-C-methyl-D-erythritol kinase.